Consider the following 384-residue polypeptide: UDP-4-amino-4-deoxy-L-arabinose--oxoglutarate aminotransferase (384 aa).

Position 182 is an N6-(pyridoxal phosphate)lysine (Lys182).

It belongs to the DegT/DnrJ/EryC1 family. ArnB subfamily. Homodimer. The cofactor is pyridoxal 5'-phosphate.

The catalysed reaction is UDP-4-amino-4-deoxy-beta-L-arabinose + 2-oxoglutarate = UDP-beta-L-threo-pentopyranos-4-ulose + L-glutamate. The protein operates within nucleotide-sugar biosynthesis; UDP-4-deoxy-4-formamido-beta-L-arabinose biosynthesis; UDP-4-deoxy-4-formamido-beta-L-arabinose from UDP-alpha-D-glucuronate: step 2/3. It functions in the pathway bacterial outer membrane biogenesis; lipopolysaccharide biosynthesis. Catalyzes the conversion of UDP-4-keto-arabinose (UDP-Ara4O) to UDP-4-amino-4-deoxy-L-arabinose (UDP-L-Ara4N). The modified arabinose is attached to lipid A and is required for resistance to polymyxin and cationic antimicrobial peptides. The protein is UDP-4-amino-4-deoxy-L-arabinose--oxoglutarate aminotransferase of Yersinia pseudotuberculosis serotype O:1b (strain IP 31758).